A 217-amino-acid polypeptide reads, in one-letter code: uncharacterized protein (217 aa).

Positions 2 to 216 constitute an ABC transporter domain; it reads LCVKNVSLRL…AQWSENYNKL (215 aa). 34–41 is a binding site for ATP; the sequence is GPSGCGKS.

Belongs to the ABC transporter superfamily.

Probably part of a binding-protein-dependent transport system YnjCD. Probably responsible for energy coupling to the transport system. This is an uncharacterized protein from Escherichia coli (strain K12).